Here is a 232-residue protein sequence, read N- to C-terminus: Thiamine import ATP-binding protein ThiQ (232 aa).

The region spanning 2–230 (LKLTDITWLY…KASASALLGI (229 aa)) is the ABC transporter domain. 32 to 39 (GPSGAGKS) contacts ATP.

The protein belongs to the ABC transporter superfamily. Thiamine importer (TC 3.A.1.19.1) family. In terms of assembly, the complex is composed of two ATP-binding proteins (ThiQ), two transmembrane proteins (ThiP) and a solute-binding protein (ThiB).

The protein localises to the cell inner membrane. It catalyses the reaction thiamine(out) + ATP + H2O = thiamine(in) + ADP + phosphate + H(+). Part of the ABC transporter complex ThiBPQ involved in thiamine import. Responsible for energy coupling to the transport system. The polypeptide is Thiamine import ATP-binding protein ThiQ (Shigella sonnei (strain Ss046)).